A 385-amino-acid polypeptide reads, in one-letter code: Methionine aminopeptidase 1 (385 aa).

The segment at 6–59 adopts a C6H2-type zinc-finger fold; sequence SRVCETEGCSSEAKLQCPTCIKLGIQGSYFCSQECFKGSWASHKLLHKKAKDDK. Zn(2+) is bound by residues Cys9, Cys14, Cys22, Cys25, Cys36, Cys40, His48, and His52. His203 provides a ligand contact to a protein. Residues Asp220, Asp231, and His294 each coordinate Zn(2+). His301 is an a protein binding site. Zn(2+) is bound by residues Glu327 and Glu358.

Belongs to the peptidase M24A family. Methionine aminopeptidase type 1 subfamily. As to quaternary structure, associates with the 60S ribosomal subunit of the 80S translational complex. Requires Zn(2+) as cofactor. Co(2+) is required as a cofactor. The cofactor is Mn(2+). It depends on Fe(2+) as a cofactor.

It localises to the cytoplasm. The enzyme catalyses Release of N-terminal amino acids, preferentially methionine, from peptides and arylamides.. In terms of biological role, cotranslationally removes the N-terminal methionine from nascent proteins. The N-terminal methionine is often cleaved when the second residue in the primary sequence is small and uncharged (Met-Ala-, Cys, Gly, Pro, Ser, Thr, or Val). The polypeptide is Methionine aminopeptidase 1 (metap1) (Xenopus tropicalis (Western clawed frog)).